Consider the following 225-residue polypeptide: ATP-dependent dethiobiotin synthetase BioD 1 (225 aa).

13 to 18 contributes to the ATP binding site; that stretch reads EVGKTV. Threonine 17 is a binding site for Mg(2+). Lysine 38 is an active-site residue. Residue serine 42 participates in substrate binding. Residues aspartate 55, 116–119, 176–177, 205–207, and glutamate 212 contribute to the ATP site; these read EGAG, ND, and PWL. 2 residues coordinate Mg(2+): aspartate 55 and glutamate 116.

Belongs to the dethiobiotin synthetase family. In terms of assembly, homodimer. Requires Mg(2+) as cofactor.

Its subcellular location is the cytoplasm. It carries out the reaction (7R,8S)-7,8-diammoniononanoate + CO2 + ATP = (4R,5S)-dethiobiotin + ADP + phosphate + 3 H(+). It participates in cofactor biosynthesis; biotin biosynthesis; biotin from 7,8-diaminononanoate: step 1/2. In terms of biological role, catalyzes a mechanistically unusual reaction, the ATP-dependent insertion of CO2 between the N7 and N8 nitrogen atoms of 7,8-diaminopelargonic acid (DAPA, also called 7,8-diammoniononanoate) to form a ureido ring. This is ATP-dependent dethiobiotin synthetase BioD 1 from Escherichia coli O157:H7.